The sequence spans 288 residues: Acetyl-coenzyme A carboxylase carboxyl transferase subunit beta (288 aa).

Residues 34 to 288 enclose the CoA carboxyltransferase N-terminal domain; that stretch reads LFAKCPGCKQ…TLLSFHGGVQ (255 aa). Zn(2+) is bound by residues cysteine 38, cysteine 41, cysteine 56, and cysteine 59. The C4-type zinc-finger motif lies at 38-59; the sequence is CPGCKQAIYQKDLGQAKICPNC.

This sequence belongs to the AccD/PCCB family. In terms of assembly, acetyl-CoA carboxylase is a heterohexamer composed of biotin carboxyl carrier protein (AccB), biotin carboxylase (AccC) and two subunits each of ACCase subunit alpha (AccA) and ACCase subunit beta (AccD). Zn(2+) is required as a cofactor.

It localises to the cytoplasm. It carries out the reaction N(6)-carboxybiotinyl-L-lysyl-[protein] + acetyl-CoA = N(6)-biotinyl-L-lysyl-[protein] + malonyl-CoA. Its pathway is lipid metabolism; malonyl-CoA biosynthesis; malonyl-CoA from acetyl-CoA: step 1/1. Component of the acetyl coenzyme A carboxylase (ACC) complex. Biotin carboxylase (BC) catalyzes the carboxylation of biotin on its carrier protein (BCCP) and then the CO(2) group is transferred by the transcarboxylase to acetyl-CoA to form malonyl-CoA. In Streptococcus thermophilus (strain ATCC BAA-491 / LMD-9), this protein is Acetyl-coenzyme A carboxylase carboxyl transferase subunit beta.